The following is a 442-amino-acid chain: MTCYRGFLLGSCCRVAGGRAAALRGPGAGGPAARPRLGGDGGGRRHLGQGQPRELAGCGSRADGGFRPSRVVVVAKTTRYEFEQQRYRYAELSEEDLKQLLALKGSSYSGLLERHHIHTKNVEHIIDSLRNEGIEVRLVKRREYDEETVRWADAVIAAGGDGTMLLAASKVLDRLKPVIGVNTDPERSEGHLCLPVRYTHSFPEALQKFYRGEFRWLWRQRIRLYLEGTGINPVPVDLHEQQLSLNQHNRALNIERAHDERSEASGPQLLPVRALNEVFIGESLSSRASYYEISVDDGPWEKQKSSGLNLCTGTGSKAWSFNINRVATQAVEDVLNIAKRQGNLSLPLNRELVEKVTNEYNESLLYSPEEPKILFSIREPIANRVFSSSRQRCFSSKVCVRSRCWDACMVVDGGTSFEFNDGAIASMMINKEDELRTVLLEQ.

The N-terminal 62 residues, 1–62 (MTCYRGFLLG…RELAGCGSRA (62 aa)), are a transit peptide targeting the mitochondrion. Low complexity predominate over residues 24 to 36 (RGPGAGGPAARPR). The segment at 24–60 (RGPGAGGPAARPRLGGDGGGRRHLGQGQPRELAGCGS) is disordered. Lys76 carries the N6-acetyllysine; alternate modification. Lys76 is modified (N6-succinyllysine; alternate). The residue at position 188 (Ser188) is a Phosphoserine. At Lys302 the chain carries N6-succinyllysine. At Lys317 the chain carries N6-acetyllysine; alternate. Lys317 is subject to N6-succinyllysine; alternate. Ser367 is subject to Phosphoserine. An N6-acetyllysine modification is found at Lys397.

The protein belongs to the NAD kinase family. Homodimer. In terms of tissue distribution, widely expressed.

It is found in the mitochondrion. It carries out the reaction NAD(+) + ATP = ADP + NADP(+) + H(+). Its activity is regulated as follows. Inhibited by NADH, NADPH and NADP(+). In terms of biological role, mitochondrial NAD(+) kinase that phosphorylates NAD(+) to yield NADP(+). Can use both ATP or inorganic polyphosphate as the phosphoryl donor. Also has weak NADH kinase activity in vitro; however NADH kinase activity is much weaker than the NAD(+) kinase activity and may not be relevant in vivo. This Homo sapiens (Human) protein is NAD kinase 2, mitochondrial (NADK2).